The chain runs to 273 residues: Dermonecrotic toxin LdSicTox-alphaIB1bii (273 aa).

His5 is an active-site residue. The Mg(2+) site is built by Glu25 and Asp27. His41 acts as the Nucleophile in catalysis. Disulfide bonds link Cys45/Cys51 and Cys47/Cys190. A Mg(2+)-binding site is contributed by Asp85. Asn250 carries N-linked (GlcNAc...) asparagine glycosylation.

The protein belongs to the arthropod phospholipase D family. Class II subfamily. It depends on Mg(2+) as a cofactor. In terms of tissue distribution, expressed by the venom gland.

The protein resides in the secreted. The catalysed reaction is an N-(acyl)-sphingosylphosphocholine = an N-(acyl)-sphingosyl-1,3-cyclic phosphate + choline. It carries out the reaction an N-(acyl)-sphingosylphosphoethanolamine = an N-(acyl)-sphingosyl-1,3-cyclic phosphate + ethanolamine. The enzyme catalyses a 1-acyl-sn-glycero-3-phosphocholine = a 1-acyl-sn-glycero-2,3-cyclic phosphate + choline. It catalyses the reaction a 1-acyl-sn-glycero-3-phosphoethanolamine = a 1-acyl-sn-glycero-2,3-cyclic phosphate + ethanolamine. Its function is as follows. Dermonecrotic toxins cleave the phosphodiester linkage between the phosphate and headgroup of certain phospholipids (sphingolipid and lysolipid substrates), forming an alcohol (often choline) and a cyclic phosphate. This toxin acts on sphingomyelin (SM). It may also act on ceramide phosphoethanolamine (CPE), lysophosphatidylcholine (LPC) and lysophosphatidylethanolamine (LPE), but not on lysophosphatidylserine (LPS), and lysophosphatidylglycerol (LPG). It acts by transphosphatidylation, releasing exclusively cyclic phosphate products as second products. Induces dermonecrosis, hemolysis, increased vascular permeability, edema, inflammatory response, and platelet aggregation. The protein is Dermonecrotic toxin LdSicTox-alphaIB1bii of Loxosceles deserta (Desert recluse spider).